We begin with the raw amino-acid sequence, 833 residues long: Neuronal tyrosine-phosphorylated phosphoinositide-3-kinase adapter 1 (833 aa).

Disordered stretches follow at residues 1-45, 64-191, 219-423, 645-674, and 736-765; these read MNLL…PGVR, PASQ…LQRL, VFRG…RELP, EEDG…PSGI, and HTPR…QPAR. Basic and acidic residues predominate over residues 8–25; that stretch reads TKLEWRQHKEEEAKRSSS. The segment at 76–181 is involved in CYFIP1- and NCKAP1-binding; sequence STMAPRSLSC…DESCAPAPSP (106 aa). Residues 111–120 are compositionally biased toward basic residues; it reads PPAKPRRHPS. Residues 162-171 show a composition bias toward polar residues; the sequence is SPNTQLSVSF. Over residues 220–239 the composition is skewed to gly residues; the sequence is FRGGGRSGGGLAGPPLGSGG. Residues 248–257 show a composition bias toward acidic residues; the sequence is SDSEDSEAIY. Residues 275 to 285 are compositionally biased toward pro residues; it reads GPPPLTAPSPP.

This sequence belongs to the NYAP family. Interacts with ACOT9, ARHGAP26 and PIK3R2. Interacts with components of the WAVE1 complex, CYFIP1 and NCKAP1; this interaction mediates PI3K-WAVE1 association and actin cytoskeleton remodeling. In terms of processing, phosphorylated on tyrosine residues by FYN upon stimulation with CNTN5. Phosphorylation begins at 14 dpc, reaches a peak during perinatal days in brain, then gradually decreases. As to expression, expressed predominantly in brain where it is present in the neurons, but not in astrocytes or oligodendrites.

In terms of biological role, activates PI3K and concomitantly recruits the WAVE1 complex to the close vicinity of PI3K and regulates neuronal morphogenesis. This is Neuronal tyrosine-phosphorylated phosphoinositide-3-kinase adapter 1 (Nyap1) from Mus musculus (Mouse).